A 118-amino-acid polypeptide reads, in one-letter code: Melanoma antigen recognized by T-cells 1 (118 aa).

Residues 27–47 (AAGIGILTVILGVLLLIGCWY) form a helical membrane-spanning segment. At 48 to 118 (CRRRNGYRAL…AEQSPPPYSP (71 aa)) the chain is on the cytoplasmic side. Residues 78 to 118 (GFDHRDSKVSLQEKNCEPVVPNAPPAYEKLSAEQSPPPYSP) are disordered. Position 108 is a phosphoserine (serine 108).

Interacts with PMEL. Interacts with GPR143. In terms of processing, acylated. As to expression, expression is restricted to melanoma and melanocyte cell lines and retina.

It localises to the endoplasmic reticulum membrane. Its subcellular location is the golgi apparatus. The protein resides in the trans-Golgi network membrane. It is found in the melanosome. Its function is as follows. Involved in melanosome biogenesis by ensuring the stability of GPR143. Plays a vital role in the expression, stability, trafficking, and processing of melanocyte protein PMEL, which is critical to the formation of stage II melanosomes. The polypeptide is Melanoma antigen recognized by T-cells 1 (MLANA) (Homo sapiens (Human)).